The sequence spans 428 residues: Keratin, type I cytoskeletal 18-A (428 aa).

The head stretch occupies residues 2–78 (SFRSQTSSTT…SVKGSGLFNN (77 aa)). A coil 1A region spans residues 79-114 (EKETMQILNDRLASYLETVRNLEQANSKLELQIRET). The 312-residue stretch at 79–390 (EKETMQILND…RLLDGEDFRL (312 aa)) folds into the IF rod domain. A linker 1 region spans residues 115–131 (LEKRGPTTQDYSAYEKV). Residues 132-223 (VEDLKSQIYD…RSHQTDVEEL (92 aa)) form a coil 1B region. The linker 12 stretch occupies residues 224-247 (RKHISECGVQVDVDAPKGQDLSKI). Positions 248–385 (MEEIRAQYET…IATYRRLLDG (138 aa)) are coil 2. Residues 386 to 428 (EDFRLQDALAVQTTKVQKKITVTETVVDGKVVSQSSEVQEIKK) are tail.

This sequence belongs to the intermediate filament family. Heterotetramer of two type I and two type II keratins. Keratin-18 associates with keratin-8. In terms of processing, phosphorylated. Post-translationally, proteolytically cleaved by caspases during epithelial cell apoptosis.

Functionally, when phosphorylated, plays a role in filament reorganization. This Polypterus senegalus (Senegal bichir) protein is Keratin, type I cytoskeletal 18-A.